The sequence spans 156 residues: Large ribosomal subunit protein eL29 (156 aa).

Over residues 1 to 26 (MAKSKNHTTHNQSRKWHRNGIKKPRS) the composition is skewed to basic residues. Disordered regions lie at residues 1–35 (MAKS…LKGV) and 116–156 (RRLC…VKAP). At lysine 5 the chain carries N6-methyllysine. A Phosphoserine modification is found at serine 31. The residue at position 33 (lysine 33) is an N6-acetyllysine. 2 repeat units span residues 129-136 (AEAKAPAK) and 137-144 (AQAKAPAQ). A 2 X 8 AA tandem repeats of A-X-A-K-A-P-A-[KQ] region spans residues 129-144 (AEAKAPAKAQAKAPAQ). Residues 134 to 156 (PAKAQAKAPAQAPKGAQAPVKAP) are compositionally biased toward low complexity.

Belongs to the eukaryotic ribosomal protein eL29 family. As to quaternary structure, component of the large ribosomal subunit.

It localises to the cytoplasm. Functionally, component of the large ribosomal subunit. The ribosome is a large ribonucleoprotein complex responsible for the synthesis of proteins in the cell. This Rattus norvegicus (Rat) protein is Large ribosomal subunit protein eL29 (Rpl29).